We begin with the raw amino-acid sequence, 1453 residues long: Collagen alpha-1(I) chain (1453 aa).

Residues 1-22 (MFSFVDLRLLLLLGATALLTHG) form the signal peptide. A propeptide spans 23–151 (QEDIPEVSCI…PPGLGGNFAS (129 aa)) (N-terminal propeptide). The region spanning 29 to 87 (VSCIHNGLRVPNGETWKPEVCLICICHNGTAVCDDVQCNEELDCPNPQRREGECCAFCP) is the VWFC domain. N-linked (GlcNAc...) asparagine glycosylation is present at Asn-56. Residues 94–1210 (NSEDVGVEGP…GGRYYRADDA (1117 aa)) are disordered. Pro residues-rich tracts occupy residues 109–118 (PQGPRGPVGP) and 128–143 (PGLP…PGPP). The tract at residues 152–167 (QMSYGYDEKSAGVSVP) is nonhelical region (N-terminal). Lys-160 is subject to Allysine. Ser-161 carries the phosphoserine modification. Positions 168-1181 (GPMGPSGPRG…PGPPGPPGPP (1014 aa)) are triple-helical region. 4-hydroxyproline occurs at positions 179, 182, 185, 194, 197, 200, 215, 230, 236, 245, and 251. Gly residues predominate over residues 198–207 (GEPGGSGPMG). Residues 218 to 232 (NGDDGEAGKPGRPGE) show a composition bias toward basic and acidic residues. Position 254 is a 5-hydroxylysine; alternate (Lys-254). O-linked (Gal...) hydroxylysine; alternate glycosylation is present at Lys-254. Ser-260 is subject to Phosphoserine. Residues 268–284 (DAGPAGPKGEPGSPGEN) show a composition bias toward low complexity. 4-hydroxyproline is present on residues Pro-278, Pro-281, Pro-287, Pro-296, and Pro-302. Low complexity predominate over residues 307–320 (TAGARGNDGAVGAA). Residues 322 to 334 (PPGPTGPTGPPGF) show a composition bias toward pro residues. Residues Pro-323, Pro-332, Pro-335, Pro-362, Pro-365, Pro-377, Pro-383, Pro-392, Pro-398, Pro-401, and Pro-416 each carry the 4-hydroxyproline modification. Residues 368 to 407 (AGAAGPAGNPGADGQPGAKGANGAPGIAGAPGFPGARGPS) are compositionally biased toward low complexity. Lys-419 is modified (5-hydroxylysine). Pro-425, Pro-428, Pro-440, Pro-449, Pro-464, Pro-470, Pro-479, and Pro-485 each carry 4-hydroxyproline. The span at 474-483 (GERGGPGSRG) shows a compositional bias: gly residues. Lys-494 carries the 5-hydroxylysine modification. Low complexity predominate over residues 499–515 (ERGAPGPAGPKGSPGEA). 28 positions are modified to 4-hydroxyproline: Pro-503, Pro-512, Pro-518, Pro-524, Pro-533, Pro-536, Pro-545, Pro-554, Pro-560, Pro-572, Pro-581, Pro-590, Pro-593, Pro-611, Pro-629, Pro-635, Pro-641, Pro-647, Pro-653, Pro-659, Pro-671, Pro-680, Pro-692, Pro-704, Pro-707, Pro-713, Pro-719, and Pro-728. Residues 527-566 (KGLTGSPGSPGPDGKTGPPGPAGQDGRPGPAGPPGARGQA) are compositionally biased toward low complexity. Over residues 623–650 (QGPAGSPGFQGLPGPAGPPGEAGKPGEQ) the composition is skewed to low complexity. 2 stretches are compositionally biased toward low complexity: residues 685–695 (PRGNNGAPGND) and 703–716 (APGA…PGLQ). Residues 734–736 (RGD) carry the Cell attachment site motif. Lys-740 bears the 5-hydroxylysine mark. A 4-hydroxyproline mark is found at Pro-746, Pro-761, and Pro-767. Residue Ser-776 is modified to Phosphoserine. Pro-788, Pro-797, Pro-806, Pro-812, Pro-830, Pro-839, and Pro-848 each carry 4-hydroxyproline. A compositionally biased stretch (low complexity) spans 800–815 (AGFAGPPGADGQPGAK). Pro residues predominate over residues 829–841 (PPGPAGPAGPPGP). Residues 842–872 (IGNVGAPGPKGPRGAAGPPGATGFPGAAGRV) are compositionally biased toward low complexity. Lys-851 is subject to 5-hydroxylysine. A 4-hydroxyproline mark is found at Pro-860 and Pro-866. The residue at position 874 (Pro-874) is a 3-hydroxyproline. 4-hydroxyproline occurs at positions 875, 884, 887, 908, 917, 926, 935, 953, 962, 965, 971, 986, 992, 998, 1007, and 1013. The segment covering 901–910 (ETGPAGRPGE) has biased composition (low complexity). Residues 920 to 935 (AGEKGSPGADGPAGSP) are compositionally biased toward low complexity. The span at 985 to 995 (PPGPMGPPGLA) shows a compositional bias: pro residues. The segment covering 997–1012 (PPGESGREGSPGAEGS) has biased composition (low complexity). Residue Lys-1022 is modified to 5-hydroxylysine. A compositionally biased stretch (pro residues) spans 1031-1046 (AGPPGAPGAPGAPGPV). 3 positions are modified to 4-hydroxyproline: Pro-1034, Pro-1037, and Pro-1040. Residues 1067 to 1081 (IGPAGARGPAGPQGP) are compositionally biased toward low complexity. The short motif at 1082-1084 (RGD) is the Cell attachment site element. The segment covering 1082–1096 (RGDKGETGEQGDRGI) has biased composition (basic and acidic residues). Lys-1085 bears the 5-hydroxylysine mark. Lys-1097 is modified (5-hydroxylysine; alternate). O-linked (Gal...) hydroxylysine; alternate glycosylation occurs at Lys-1097. The segment covering 1102–1148 (FSGLQGPPGSPGSPGEQGPSGASGPAGPRGPPGSAGSPGKDGLNGLP) has biased composition (low complexity). A 4-hydroxyproline mark is found at Pro-1109, Pro-1112, Pro-1115, Pro-1133, and Pro-1148. Residue Pro-1153 is modified to 3-hydroxyproline. Pro-1154 is modified (4-hydroxyproline). The segment covering 1166–1181 (AGPPGPPGPPGPPGPP) has biased composition (pro residues). Pro-1168 bears the 3-hydroxyproline mark. 4-hydroxyproline is present on Pro-1169. The residue at position 1171 (Pro-1171) is a 3-hydroxyproline. Pro-1172 carries the post-translational modification 4-hydroxyproline. Pro-1174 is modified (3-hydroxyproline). 4-hydroxyproline is present on residues Pro-1175, Pro-1178, and Pro-1181. Residues 1182 to 1207 (SGGYDFSFLPQPPQEKSQDGGRYYRA) form a nonhelical region (C-terminal) region. The residue at position 1197 (Lys-1197) is an Allysine. Residues 1197-1210 (KSQDGGRYYRADDA) are compositionally biased toward basic and acidic residues. Positions 1208–1453 (DDANVVRDRD…GLDIGPACFV (246 aa)) are cleaved as a propeptide — C-terminal propeptide. One can recognise a Fibrillar collagen NC1 domain in the interval 1218–1453 (LEVDTTLKSL…GLDIGPACFV (236 aa)). Intrachain disulfides connect Cys-1248-Cys-1280, Cys-1288-Cys-1451, and Cys-1359-Cys-1404. The Ca(2+) site is built by Asp-1266, Asn-1268, Gln-1269, Cys-1271, and Asp-1274. Asn-1354 is a glycosylation site (N-linked (GlcNAc...) asparagine).

This sequence belongs to the fibrillar collagen family. As to quaternary structure, trimers of one alpha 2(I) and two alpha 1(I) chains. Interacts with MRC2. Interacts with TRAM2. Interacts with MFAP4 in a Ca (2+)-dependent manner. Contains mostly 4-hydroxyproline. Proline residues at the third position of the tripeptide repeating unit (G-X-Y) are hydroxylated in some or all of the chains. Post-translationally, contains 3-hydroxyproline at a few sites. This modification occurs on the first proline residue in the sequence motif Gly-Pro-Hyp, where Hyp is 4-hydroxyproline. In terms of processing, lysine residues at the third position of the tripeptide repeating unit (G-X-Y) are 5-hydroxylated in some or all of the chains. O-glycosylated on hydroxylated lysine residues. The O-linked glycan consists of a Glc-Gal disaccharide. In terms of tissue distribution, forms the fibrils of tendon, ligaments and bones. In bones the fibrils are mineralized with calcium hydroxyapatite.

It is found in the secreted. Its subcellular location is the extracellular space. The protein resides in the extracellular matrix. In terms of biological role, type I collagen is a member of group I collagen (fibrillar forming collagen). The polypeptide is Collagen alpha-1(I) chain (Mus musculus (Mouse)).